Reading from the N-terminus, the 363-residue chain is MTSEQALLVLGIETTCDETAAAVVERRADGSGRLLSNIVRSQTDEHAPFGGVVPEIAARAHVDVLDGIIAAAMNEAGVAFASLSGVAAAAGPGLIGGVIVGLTTAKAIALVHGTPLIAVNHLEAHALTPRLTDAVEFPYCLFLASGGHTQIVAVLGVGNYVRLGTTVDDAIGEAFDKIAKMLGLPYPGGPQVERAAEAGDPNRFAFPRPMLGRQDANFSLSGLKTAVRNEAGKLTPLDPQDINDLCAGFQAAVLESVADRLGAGLRLFKERFGPPKALVAAGGAAANQAIRRMLREVAAKVQTTLIVPPPSLCTDNGAMIAWAGAERLALGLTDTMDTAPRARWLLDANATAPAKFANTRAGF.

Fe cation contacts are provided by His-121 and His-125. Substrate-binding positions include 143-147 (LASGG), Asp-176, Gly-189, and Asn-287. Position 315 (Asp-315) interacts with Fe cation.

The protein belongs to the KAE1 / TsaD family. It depends on Fe(2+) as a cofactor.

The protein localises to the cytoplasm. It carries out the reaction L-threonylcarbamoyladenylate + adenosine(37) in tRNA = N(6)-L-threonylcarbamoyladenosine(37) in tRNA + AMP + H(+). Its function is as follows. Required for the formation of a threonylcarbamoyl group on adenosine at position 37 (t(6)A37) in tRNAs that read codons beginning with adenine. Is involved in the transfer of the threonylcarbamoyl moiety of threonylcarbamoyl-AMP (TC-AMP) to the N6 group of A37, together with TsaE and TsaB. TsaD likely plays a direct catalytic role in this reaction. The protein is tRNA N6-adenosine threonylcarbamoyltransferase of Rhodopseudomonas palustris (strain TIE-1).